The primary structure comprises 77 residues: MVFEKVKDIIADQLGIDATEIKMESSFIDDLGADSLDIVELIMALEEEFDIEMPDEEAEKVSSVGDVVNYIKAHTEE.

One can recognise a Carrier domain in the interval 1–75; the sequence is MVFEKVKDII…DVVNYIKAHT (75 aa). At Ser35 the chain carries O-(pantetheine 4'-phosphoryl)serine.

The protein belongs to the acyl carrier protein (ACP) family. Post-translationally, 4'-phosphopantetheine is transferred from CoA to a specific serine of apo-ACP by AcpS. This modification is essential for activity because fatty acids are bound in thioester linkage to the sulfhydryl of the prosthetic group.

The protein resides in the cytoplasm. It functions in the pathway lipid metabolism; fatty acid biosynthesis. Carrier of the growing fatty acid chain in fatty acid biosynthesis. This is Acyl carrier protein from Clostridium acetobutylicum (strain ATCC 824 / DSM 792 / JCM 1419 / IAM 19013 / LMG 5710 / NBRC 13948 / NRRL B-527 / VKM B-1787 / 2291 / W).